A 354-amino-acid polypeptide reads, in one-letter code: Ornithine carbamoyltransferase, catabolic (354 aa).

Carbamoyl phosphate is bound by residues 67-70 (STRT), Gln94, Arg118, and 145-148 (HPTQ). Residues Asn177, Asp241, and 245 to 246 (SM) contribute to the L-ornithine site. Residues 284 to 285 (CL) and Arg329 each bind carbamoyl phosphate.

Belongs to the aspartate/ornithine carbamoyltransferase superfamily. OTCase family.

The protein localises to the cytoplasm. The catalysed reaction is carbamoyl phosphate + L-ornithine = L-citrulline + phosphate + H(+). The protein operates within amino-acid degradation; L-arginine degradation via ADI pathway; carbamoyl phosphate from L-arginine: step 2/2. In terms of biological role, reversibly catalyzes the transfer of the carbamoyl group from carbamoyl phosphate (CP) to the N(epsilon) atom of ornithine (ORN) to produce L-citrulline. This is Ornithine carbamoyltransferase, catabolic (arcB) from Lactococcus lactis subsp. cremoris (strain MG1363).